A 790-amino-acid polypeptide reads, in one-letter code: Threonine--tRNA ligase 2, cytoplasmic (790 aa).

N-acetylalanine is present on Ala2. A coiled-coil region spans residues Ser13 to Leu68. A disordered region spans residues Arg80–Pro117. Positions Gln96–Pro117 are enriched in basic and acidic residues. The 63-residue stretch at Asn148–Met210 folds into the TGS domain. The residue at position 441 (Ser441) is a Phosphoserine. The Nuclear localization signal motif lies at Lys774–Lys780.

Belongs to the class-II aminoacyl-tRNA synthetase family. As to quaternary structure, may be a component of the multisynthetase complex (MSC), a large multi-subunit complex which contains at least eight different aminoacyl-tRNA synthetases plus three auxillary subunits AIMP1, AIMP2 and EEF1E1. Interacts with the MSC components EPRS1, AIMP1, AIMP2 and KARS1. Ubiquitous (at protein level). Strongly expressed in muscle (at protein level). Moderately expressed in heart and liver (at protein level). Weakly expressed in stomach, kidney, testis, spleen, brain, fat and lung (at protein level).

The protein localises to the cytoplasm. The protein resides in the nucleus. It catalyses the reaction tRNA(Thr) + L-threonine + ATP = L-threonyl-tRNA(Thr) + AMP + diphosphate + H(+). Functionally, catalyzes the attachment of threonine to tRNA(Thr) in a two-step reaction: threonine is first activated by ATP to form Thr-AMP and then transferred to the acceptor end of tRNA(Thr). Also edits incorrectly charged tRNA(Thr) via its editing domain, at the post-transfer stage. The sequence is that of Threonine--tRNA ligase 2, cytoplasmic (Tars3) from Mus musculus (Mouse).